Here is a 199-residue protein sequence, read N- to C-terminus: V-type proton ATPase subunit E (199 aa).

This sequence belongs to the V-ATPase E subunit family.

Produces ATP from ADP in the presence of a proton gradient across the membrane. This Clostridium botulinum (strain 657 / Type Ba4) protein is V-type proton ATPase subunit E.